Reading from the N-terminus, the 113-residue chain is uncharacterized protein (113 aa).

The interval 31–113 (SNNNNNNNNN…YSPTKFNLQY (83 aa)) is disordered. The segment covering 32–98 (NNNNNNNNNN…NNNNNNNNNN (67 aa)) has biased composition (low complexity). Residues 99–113 (SSSFEYSPTKFNLQY) show a composition bias toward polar residues.

This is an uncharacterized protein from Dictyostelium discoideum (Social amoeba).